Here is a 350-residue protein sequence, read N- to C-terminus: Protein-glutamate methylesterase/protein-glutamine glutaminase (350 aa).

In terms of domain architecture, Response regulatory spans 5-122 (KVLCVDDSAL…RDGLIEYSEV (118 aa)). Residue Asp56 is modified to 4-aspartylphosphate. The CheB-type methylesterase domain occupies 152 to 346 (PFASSEKLVI…ERILTRLGDR (195 aa)). Catalysis depends on residues Ser165, His191, and Asp288.

This sequence belongs to the CheB family. Post-translationally, phosphorylated by CheA. Phosphorylation of the N-terminal regulatory domain activates the methylesterase activity.

Its subcellular location is the cytoplasm. The enzyme catalyses [protein]-L-glutamate 5-O-methyl ester + H2O = L-glutamyl-[protein] + methanol + H(+). The catalysed reaction is L-glutaminyl-[protein] + H2O = L-glutamyl-[protein] + NH4(+). Involved in chemotaxis. Part of a chemotaxis signal transduction system that modulates chemotaxis in response to various stimuli. Catalyzes the demethylation of specific methylglutamate residues introduced into the chemoreceptors (methyl-accepting chemotaxis proteins or MCP) by CheR. Also mediates the irreversible deamidation of specific glutamine residues to glutamic acid. This chain is Protein-glutamate methylesterase/protein-glutamine glutaminase, found in Bordetella bronchiseptica (strain ATCC BAA-588 / NCTC 13252 / RB50) (Alcaligenes bronchisepticus).